A 230-amino-acid polypeptide reads, in one-letter code: MFRLKELQKKQQQQQQQQQQAAAPATNGTDAVTTEPTDVKRQNSNDLKEIRKQKSKDSYFSLKTKQSSESGSKRANPAELRAQKDIDEMEVPTGCAVSFKDTNDILNFNLSITPTDGLYQSATFQFTINIPSTYPYDPPKVHCDTLVYHPNIDLEGHVCLNILRQDWMPVLNIGTVIFGLMTLFLEPNPDDPLNKDAAQLMIDNKKTFEANVRQSLRGGYISNRQFPKLL.

Residues 1–87 (MFRLKELQKK…AELRAQKDID (87 aa)) form a disordered region. Residues 10-20 (KQQQQQQQQQQ) show a composition bias toward low complexity. Polar residues predominate over residues 26–36 (TNGTDAVTTEP). A compositionally biased stretch (basic and acidic residues) spans 37–57 (TDVKRQNSNDLKEIRKQKSKD). Residues 61–70 (SLKTKQSSES) show a composition bias toward polar residues. A UBC core domain is found at 77–221 (PAELRAQKDI…VRQSLRGGYI (145 aa)). Cysteine 159 serves as the catalytic Glycyl thioester intermediate.

Belongs to the ubiquitin-conjugating enzyme family. UBC12 subfamily.

It catalyses the reaction [E1 NEDD8-activating enzyme]-S-[NEDD8 protein]-yl-L-cysteine + [E2 NEDD8-conjugating enzyme]-L-cysteine = [E1 NEDD8-activating enzyme]-L-cysteine + [E2 NEDD8-conjugating enzyme]-S-[NEDD8-protein]-yl-L-cysteine.. Its pathway is protein modification; protein neddylation. Accepts the ubiquitin-like protein nedd8 from the uba3-nae1 E1 complex and catalyzes its covalent attachment to other proteins. The polypeptide is NEDD8-conjugating enzyme Ubc12 (ube2m) (Dictyostelium discoideum (Social amoeba)).